Reading from the N-terminus, the 292-residue chain is 33 kDa chaperonin (292 aa).

Cystine bridges form between Cys230-Cys232 and Cys263-Cys266.

This sequence belongs to the HSP33 family. In terms of processing, under oxidizing conditions two disulfide bonds are formed involving the reactive cysteines. Under reducing conditions zinc is bound to the reactive cysteines and the protein is inactive.

Its subcellular location is the cytoplasm. Functionally, redox regulated molecular chaperone. Protects both thermally unfolding and oxidatively damaged proteins from irreversible aggregation. Plays an important role in the bacterial defense system toward oxidative stress. The protein is 33 kDa chaperonin of Shigella dysenteriae serotype 1 (strain Sd197).